The primary structure comprises 220 residues: Probable GTP-binding protein EngB (220 aa).

The EngB-type G domain maps to 31–205; the sequence is AGVEIAFAGR…LGILNEWCHP (175 aa). Residues 39–46, 66–70, 84–87, 151–154, and 184–186 each bind GTP; these read GRSNAGKS, GRTQL, DLPG, TKAD, and FSS. Serine 46 and threonine 68 together coordinate Mg(2+).

This sequence belongs to the TRAFAC class TrmE-Era-EngA-EngB-Septin-like GTPase superfamily. EngB GTPase family. The cofactor is Mg(2+).

Necessary for normal cell division and for the maintenance of normal septation. This Shewanella sediminis (strain HAW-EB3) protein is Probable GTP-binding protein EngB.